A 159-amino-acid chain; its full sequence is Fatty acid-binding protein homolog 1 (159 aa).

A signal peptide spans 1-17 (MCAKIALLLVLVGAASA).

It belongs to the calycin superfamily. Fatty-acid binding protein (FABP) family. As to expression, first detected in hypodermal precursor cells at the time of gastrulation. From the two-fold stage through to three-fold stages, expression is localized exclusively to hyp-7 but disappears in newly hatched L1s and subsequent developmental stages. Expression from L1 to adult stages is found in a single neuron in the ventral cord with a process into the nerve ring.

It localises to the secreted. In terms of biological role, may play a role in sequestering potentially toxic fatty acids and their peroxidation products, or it may be involved in the maintenance of the impermeable lipid layer of the eggshell. This chain is Fatty acid-binding protein homolog 1 (lbp-1), found in Caenorhabditis elegans.